We begin with the raw amino-acid sequence, 571 residues long: Septation ring formation regulator EzrA (571 aa).

Topologically, residues 1-3 (MYY) are extracellular. Residues 4–22 (MLIGFIIVVIAVIGAGYIL) traverse the membrane as a helical segment. Topologically, residues 23-571 (KRKHYQRINE…ASKVSVDDIE (549 aa)) are cytoplasmic. 5 coiled-coil regions span residues 102–147 (ATNA…TKEK), 248–298 (LAQM…DTLE), 326–374 (DALA…ASGE), 400–437 (KFAE…ERER), and 478–529 (RIAE…ENHF).

The protein belongs to the EzrA family.

The protein localises to the cell membrane. In terms of biological role, negative regulator of FtsZ ring formation; modulates the frequency and position of FtsZ ring formation. Inhibits FtsZ ring formation at polar sites. Interacts either with FtsZ or with one of its binding partners to promote depolymerization. In Listeria monocytogenes serotype 4a (strain HCC23), this protein is Septation ring formation regulator EzrA.